The chain runs to 1603 residues: DNA polymerase theta (1603 aa).

The Helicase ATP-binding domain occupies 38–208 (EARQFEDQHL…WLDGAKVFEA (171 aa)). 51–58 (APTSAGKS) serves as a coordination point for ATP. Positions 149-152 (DEMH) match the DEAH box motif. One can recognise a Helicase C-terminal domain in the interval 283 to 434 (TDSSLLEILK…GVLTRKRDAE (152 aa)).

Belongs to the DNA polymerase type-A family.

Its subcellular location is the nucleus. The enzyme catalyses DNA(n) + a 2'-deoxyribonucleoside 5'-triphosphate = DNA(n+1) + diphosphate. Its function is as follows. DNA polymerase that promotes microhomology-mediated end-joining (MMEJ), an alternative non-homologous end-joining (NHEJ) machinery triggered in response to double-strand breaks in DNA. MMEJ is an error-prone repair pathway that produces deletions of sequences from the strand being repaired and promotes genomic rearrangements, such as telomere fusions. Required to prevent extensive loss of sequences near G-quadruplex (G4) DNA sites, which are prone to cause genome alterations, by generating deletions. The sequence is that of DNA polymerase theta from Caenorhabditis elegans.